We begin with the raw amino-acid sequence, 344 residues long: Arginine N-succinyltransferase (344 aa).

Leu125 is a succinyl-CoA binding site. The Proton donor role is filled by His229.

It belongs to the arginine N-succinyltransferase family.

The enzyme catalyses succinyl-CoA + L-arginine = N(2)-succinyl-L-arginine + CoA + H(+). The protein operates within amino-acid degradation; L-arginine degradation via AST pathway; L-glutamate and succinate from L-arginine: step 1/5. Functionally, catalyzes the transfer of succinyl-CoA to arginine to produce N(2)-succinylarginine. This is Arginine N-succinyltransferase from Escherichia coli O6:K15:H31 (strain 536 / UPEC).